The sequence spans 372 residues: Queuine tRNA-ribosyltransferase (372 aa).

Aspartate 90 (proton acceptor) is an active-site residue. Substrate is bound by residues 90–94, aspartate 144, glutamine 193, and glycine 220; that span reads DSGGF. An RNA binding region spans residues 251-257; sequence GVGTPED. Residue aspartate 270 is the Nucleophile of the active site. The RNA binding; important for wobble base 34 recognition stretch occupies residues 275 to 279; the sequence is TRNAR. Zn(2+) is bound by residues cysteine 308, cysteine 310, cysteine 313, and histidine 339.

It belongs to the queuine tRNA-ribosyltransferase family. As to quaternary structure, homodimer. Within each dimer, one monomer is responsible for RNA recognition and catalysis, while the other monomer binds to the replacement base PreQ1. Requires Zn(2+) as cofactor.

The catalysed reaction is 7-aminomethyl-7-carbaguanine + guanosine(34) in tRNA = 7-aminomethyl-7-carbaguanosine(34) in tRNA + guanine. Its pathway is tRNA modification; tRNA-queuosine biosynthesis. In terms of biological role, catalyzes the base-exchange of a guanine (G) residue with the queuine precursor 7-aminomethyl-7-deazaguanine (PreQ1) at position 34 (anticodon wobble position) in tRNAs with GU(N) anticodons (tRNA-Asp, -Asn, -His and -Tyr). Catalysis occurs through a double-displacement mechanism. The nucleophile active site attacks the C1' of nucleotide 34 to detach the guanine base from the RNA, forming a covalent enzyme-RNA intermediate. The proton acceptor active site deprotonates the incoming PreQ1, allowing a nucleophilic attack on the C1' of the ribose to form the product. After dissociation, two additional enzymatic reactions on the tRNA convert PreQ1 to queuine (Q), resulting in the hypermodified nucleoside queuosine (7-(((4,5-cis-dihydroxy-2-cyclopenten-1-yl)amino)methyl)-7-deazaguanosine). The sequence is that of Queuine tRNA-ribosyltransferase from Sulfurimonas denitrificans (strain ATCC 33889 / DSM 1251) (Thiomicrospira denitrificans (strain ATCC 33889 / DSM 1251)).